The primary structure comprises 370 residues: MSLSRLSVTGVRNLHPVTLSPSPRINILFGDNGSGKTSLLEAIHLLGLARSFRSIRLNPVITYEQPACTVFGQVELPDQHSRALGVSRDRSGEVRIRIDGQSVRSAAELADTLPLQLINPDSFRLLEGAPKLRRQFLDWGVFHVEHRFMSAWQRLQQALRQRNSWLRHGTLDSASDAAWSRELSLASDEIDGYRRAYIQALKPVFETTLKALLDLDGLTLSYYRGWDKDRPLVDVLASSLERDRAMGHTQSGPQRADLRLKVGSHNAAEVLSRGQQKLVVCALRIAQGHLVSEAKRGQCIYLVDDLPSELDAQHRLALCRLLEQLNCQVFITCVDSTVLQEGWGEQTPVSMFHVEHGQITQLHGPSGVKA.

An ATP-binding site is contributed by 30–37 (GDNGSGKT).

It belongs to the RecF family.

The protein localises to the cytoplasm. Functionally, the RecF protein is involved in DNA metabolism; it is required for DNA replication and normal SOS inducibility. RecF binds preferentially to single-stranded, linear DNA. It also seems to bind ATP. The polypeptide is DNA replication and repair protein RecF (Stutzerimonas stutzeri (strain A1501) (Pseudomonas stutzeri)).